The primary structure comprises 610 residues: Solute carrier family 23 member 3 (610 aa).

Residues 1 to 16 (MSRSPLNPSQLRSVGS) show a composition bias toward polar residues. Residues 1–32 (MSRSPLNPSQLRSVGSQDALAPLPPPAPQNPS) are disordered. At 1–49 (MSRSPLNPSQLRSVGSQDALAPLPPPAPQNPSTHSWDPLCGSLPWGLSC) the chain is on the cytoplasmic side. The chain crosses the membrane as a helical span at residues 50–70 (LLALQHVLVMASLLCVSHLLL). Residues 71-85 (LCSLSPGGLSYSPSQ) are Extracellular-facing. The helical transmembrane segment at 86–106 (LLASSFFSCGMSTILQTWMGS) threads the bilayer. The Cytoplasmic portion of the chain corresponds to 107-164 (RLPLVQAPSLEFLIPALVLTSQKLPRAIQTPGNSSLMLHLCRGPSCHGLGHWNTSLQE). A helical membrane pass occupies residues 165 to 185 (VSGAVVVSGLLQGMMGLLGSP). The Extracellular portion of the chain corresponds to 186 to 187 (GH). A helical transmembrane segment spans residues 188-208 (VFPHCGPLVLAPSLVVAGLSA). Over 209 to 211 (HRE) the chain is Cytoplasmic. The helical transmembrane segment at 212 to 232 (VAQFCFTHWGLALLVILLMVV) threads the bilayer. Residues 233 to 266 (CSQHLGSCQFHVCPWRRASTSSTHTPLPVFRLLS) are Extracellular-facing. The helical transmembrane segment at 267–287 (VLIPVACVWIVSAFVGFSVIP) threads the bilayer. The Cytoplasmic portion of the chain corresponds to 288 to 316 (QELSAPTKAPWIWLPHPGEWNWPLLTPRA). The chain crosses the membrane as a helical span at residues 317–337 (LAAGISMALAASTSSLGCYAL). Over 338 to 355 (CGRLLHLPPPPPHACSRG) the chain is Extracellular. Residues 356 to 376 (LSLEGLGSVLAGLLGSPMGTA) traverse the membrane as a helical segment. Topologically, residues 377–394 (SSFPNVGKVGLIQAGSQQ) are cytoplasmic. The chain crosses the membrane as a helical span at residues 395-414 (VAHLVGLLCVGLGLSPRLAQ). The Extracellular segment spans residues 415–423 (LLTTIPLPV). A helical membrane pass occupies residues 424–446 (VGGVLGVTQAVVLSAGFSSFYLA). The Cytoplasmic portion of the chain corresponds to 447–452 (DIDSGR). Residues 453-472 (NIFIVGFSIFMALLLPRWFR) traverse the membrane as a helical segment. Residues 473–486 (EAPVLFSTGWSPLD) lie on the Extracellular side of the membrane. The helical transmembrane segment at 487–507 (VLLHSLLTQPIFLAGLSGFLL) threads the bilayer. Residues 508-610 (ENTIPGTQLE…SSREGFRSQK (103 aa)) lie on the Cytoplasmic side of the membrane. The interval 571 to 610 (PEDPGDEEGGSSEPEEMADLLPGSGEPCPESSREGFRSQK) is disordered. The span at 573–588 (DPGDEEGGSSEPEEMA) shows a compositional bias: acidic residues. Residues 601–610 (SSREGFRSQK) show a composition bias toward basic and acidic residues.

The protein belongs to the nucleobase:cation symporter-2 (NCS2) (TC 2.A.40) family.

It is found in the membrane. It carries out the reaction hypoxanthine(out) + Na(+)(out) = hypoxanthine(in) + Na(+)(in). In terms of biological role, acts as a sodium-dependent hypoxanthine transporter. May show xanthine-hypoxanthine exchange activity. The protein is Solute carrier family 23 member 3 (SLC23A3) of Homo sapiens (Human).